A 232-amino-acid chain; its full sequence is Ion-translocating oxidoreductase complex subunit E (232 aa).

6 helical membrane passes run 18-38 (GLVQ…ITNA), 39-59 (LGLG…VSLV), 69-89 (IPVF…LINA), 93-113 (GLYL…IIIG), 127-147 (AAFD…VLGA), and 182-202 (PFLL…LIAL).

It belongs to the NqrDE/RnfAE family. As to quaternary structure, the complex is composed of six subunits: RnfA, RnfB, RnfC, RnfD, RnfE and RnfG.

The protein resides in the cell inner membrane. Its function is as follows. Part of a membrane-bound complex that couples electron transfer with translocation of ions across the membrane. The sequence is that of Ion-translocating oxidoreductase complex subunit E from Shewanella sp. (strain W3-18-1).